Reading from the N-terminus, the 877-residue chain is MSETVKDKVIIDEKVSTKGTVDYAEGAEYSERLSNHSSDFSQWYTDEQILHFMKKLGYENRTLYDIPEDVAYILKKMPELTLEDSFKILKDSIIYFKDDENIPHDQYEEWKRLVDLEDLDSKEGIDEYDSFDIRAFASAIKFHSPYQEVRAVVDPEDDPTIPVETFRAYFLAIIWSVIGSGFNEFFSHRVVSISLNTPIIQMFLYICGKAWAKTIPCWTITIRGRKYGINIDKPWTQKEQMFSTLLYAICQGAFYTHYNILTQKLFYHSAFSFGYQFLLSLSVQFIGFGFAGILRKFVVYPARALWPTVMPTIAINKALLGKEKHESGMSRYKFFFLTFFIMFIYNWFPTYIINILNTFNWMTWIKPSNINLANITGGVTGLGINPISSFDWNVISFNSPLVYPFWSYLTQYLGCILAALIVIAVYYSNYMSCQYLPIFTNSLYTNTGHSFKVTEVLDSDNKLDVKKYQSYSPPYYSAGNLVSYGAFICAYPLMITWSFIVHSKLLFNAFKDWALNLWAMRKLKSWVTMFKSDYRALDDYDDPHSNAMKNYKEVPDWWYFAILIGSLVVGIAVVEHYPTNTPVWGLFVCLGFNFVFLIPTTILQATTGYSFGLNLLIEMVMGYALPGNPIAIMILKAFGYNIDGQADNYVSNLKIAHYCKIPPMALFRGQCVIVFIQIFVNLGVLNWQISNIKDFCTPHQNAKFTCPDAVTYYNASVVWGAIGPKRIFNYIYPIFKWCWLIGACIGIFFGVWKRWGKFYPRYFDPMLFVGGMLNMSPPYNLMYYTSGMIVSYISQYYMKRHHLNLWEKYNYVLSAGFSTGLVLSAIIIFFAVQYKDTAFNWWGNTVPYAGADGVGYPLKNITDTANGYFGYAPGHYP.

The Cytoplasmic segment spans residues 1–167 (MSETVKDKVI…DPTIPVETFR (167 aa)). A helical membrane pass occupies residues 168 to 188 (AYFLAIIWSVIGSGFNEFFSH). A topological domain (extracellular) is located at residue arginine 189. The chain crosses the membrane as a helical span at residues 190-210 (VVSISLNTPIIQMFLYICGKA). Over 211–240 (WAKTIPCWTITIRGRKYGINIDKPWTQKEQ) the chain is Cytoplasmic. A helical transmembrane segment spans residues 241 to 261 (MFSTLLYAICQGAFYTHYNIL). Residues 262–272 (TQKLFYHSAFS) lie on the Extracellular side of the membrane. The helical transmembrane segment at 273–293 (FGYQFLLSLSVQFIGFGFAGI) threads the bilayer. Topologically, residues 294–334 (LRKFVVYPARALWPTVMPTIAINKALLGKEKHESGMSRYKF) are cytoplasmic. A helical membrane pass occupies residues 335-355 (FFLTFFIMFIYNWFPTYIINI). Topologically, residues 356–374 (LNTFNWMTWIKPSNINLAN) are extracellular. Asparagine 374 carries N-linked (GlcNAc...) asparagine glycosylation. The chain crosses the membrane as a helical span at residues 375-395 (ITGGVTGLGINPISSFDWNVI). Topologically, residues 396 to 404 (SFNSPLVYP) are cytoplasmic. Residues 405–425 (FWSYLTQYLGCILAALIVIAV) traverse the membrane as a helical segment. The Extracellular portion of the chain corresponds to 426–480 (YYSNYMSCQYLPIFTNSLYTNTGHSFKVTEVLDSDNKLDVKKYQSYSPPYYSAGN). The chain crosses the membrane as a helical span at residues 481-501 (LVSYGAFICAYPLMITWSFIV). Residues 502 to 553 (HSKLLFNAFKDWALNLWAMRKLKSWVTMFKSDYRALDDYDDPHSNAMKNYKE) are Cytoplasmic-facing. Residues 554–574 (VPDWWYFAILIGSLVVGIAVV) traverse the membrane as a helical segment. At 575 to 582 (EHYPTNTP) the chain is on the extracellular side. Residues 583-603 (VWGLFVCLGFNFVFLIPTTIL) form a helical membrane-spanning segment. Topologically, residues 604 to 614 (QATTGYSFGLN) are cytoplasmic. Residues 615 to 635 (LLIEMVMGYALPGNPIAIMIL) form a helical membrane-spanning segment. The Extracellular portion of the chain corresponds to 636 to 671 (KAFGYNIDGQADNYVSNLKIAHYCKIPPMALFRGQC). The chain crosses the membrane as a helical span at residues 672–692 (VIVFIQIFVNLGVLNWQISNI). Residues 693 to 730 (KDFCTPHQNAKFTCPDAVTYYNASVVWGAIGPKRIFNY) lie on the Cytoplasmic side of the membrane. A helical membrane pass occupies residues 731–751 (IYPIFKWCWLIGACIGIFFGV). Residues 752–766 (WKRWGKFYPRYFDPM) are Extracellular-facing. The helical transmembrane segment at 767–789 (LFVGGMLNMSPPYNLMYYTSGMI) threads the bilayer. At 790 to 811 (VSYISQYYMKRHHLNLWEKYNY) the chain is on the cytoplasmic side. A helical transmembrane segment spans residues 812-832 (VLSAGFSTGLVLSAIIIFFAV). Topologically, residues 833-877 (QYKDTAFNWWGNTVPYAGADGVGYPLKNITDTANGYFGYAPGHYP) are extracellular. The N-linked (GlcNAc...) asparagine glycan is linked to asparagine 860.

Belongs to the oligopeptide OPT transporter family.

It localises to the membrane. Transports tetra- and pentapeptides. Does not transport glutathione. The sequence is that of Oligopeptide transporter 2 (OPT2) from Saccharomyces cerevisiae (strain ATCC 204508 / S288c) (Baker's yeast).